The chain runs to 184 residues: Peptide deformylase (184 aa).

C111 and H154 together coordinate Fe cation. Residue E155 is part of the active site. H158 serves as a coordination point for Fe cation.

It belongs to the polypeptide deformylase family. Fe(2+) is required as a cofactor.

The catalysed reaction is N-terminal N-formyl-L-methionyl-[peptide] + H2O = N-terminal L-methionyl-[peptide] + formate. In terms of biological role, removes the formyl group from the N-terminal Met of newly synthesized proteins. Requires at least a dipeptide for an efficient rate of reaction. N-terminal L-methionine is a prerequisite for activity but the enzyme has broad specificity at other positions. The sequence is that of Peptide deformylase from Lactobacillus gasseri (strain ATCC 33323 / DSM 20243 / BCRC 14619 / CIP 102991 / JCM 1131 / KCTC 3163 / NCIMB 11718 / NCTC 13722 / AM63).